The chain runs to 357 residues: UDP-N-acetylglucosamine--N-acetylmuramyl-(pentapeptide) pyrophosphoryl-undecaprenol N-acetylglucosamine transferase (357 aa).

UDP-N-acetyl-alpha-D-glucosamine contacts are provided by residues 13–15, asparagine 125, arginine 161, serine 189, isoleucine 243, and glutamine 288; that span reads TGG.

This sequence belongs to the glycosyltransferase 28 family. MurG subfamily.

It localises to the cell inner membrane. It carries out the reaction di-trans,octa-cis-undecaprenyl diphospho-N-acetyl-alpha-D-muramoyl-L-alanyl-D-glutamyl-meso-2,6-diaminopimeloyl-D-alanyl-D-alanine + UDP-N-acetyl-alpha-D-glucosamine = di-trans,octa-cis-undecaprenyl diphospho-[N-acetyl-alpha-D-glucosaminyl-(1-&gt;4)]-N-acetyl-alpha-D-muramoyl-L-alanyl-D-glutamyl-meso-2,6-diaminopimeloyl-D-alanyl-D-alanine + UDP + H(+). It participates in cell wall biogenesis; peptidoglycan biosynthesis. In terms of biological role, cell wall formation. Catalyzes the transfer of a GlcNAc subunit on undecaprenyl-pyrophosphoryl-MurNAc-pentapeptide (lipid intermediate I) to form undecaprenyl-pyrophosphoryl-MurNAc-(pentapeptide)GlcNAc (lipid intermediate II). In Bordetella pertussis (strain Tohama I / ATCC BAA-589 / NCTC 13251), this protein is UDP-N-acetylglucosamine--N-acetylmuramyl-(pentapeptide) pyrophosphoryl-undecaprenol N-acetylglucosamine transferase.